Reading from the N-terminus, the 875-residue chain is Protein translocase subunit SecA (875 aa).

ATP contacts are provided by residues Gln-87, Gly-105–Thr-109, and Asp-512. The Zn(2+) site is built by Cys-860, Cys-862, Cys-871, and His-872.

Belongs to the SecA family. In terms of assembly, monomer and homodimer. Part of the essential Sec protein translocation apparatus which comprises SecA, SecYEG and auxiliary proteins SecDF-YajC and YidC. The cofactor is Zn(2+).

The protein resides in the cell inner membrane. The protein localises to the cytoplasm. It carries out the reaction ATP + H2O + cellular proteinSide 1 = ADP + phosphate + cellular proteinSide 2.. Part of the Sec protein translocase complex. Interacts with the SecYEG preprotein conducting channel. Has a central role in coupling the hydrolysis of ATP to the transfer of proteins into and across the cell membrane, serving both as a receptor for the preprotein-SecB complex and as an ATP-driven molecular motor driving the stepwise translocation of polypeptide chains across the membrane. This chain is Protein translocase subunit SecA, found in Buchnera aphidicola subsp. Acyrthosiphon pisum (strain 5A).